The chain runs to 366 residues: Histidinol-phosphate aminotransferase (366 aa).

Position 228 is an N6-(pyridoxal phosphate)lysine (K228).

It belongs to the class-II pyridoxal-phosphate-dependent aminotransferase family. Histidinol-phosphate aminotransferase subfamily. Homodimer. Pyridoxal 5'-phosphate is required as a cofactor.

It carries out the reaction L-histidinol phosphate + 2-oxoglutarate = 3-(imidazol-4-yl)-2-oxopropyl phosphate + L-glutamate. Its pathway is amino-acid biosynthesis; L-histidine biosynthesis; L-histidine from 5-phospho-alpha-D-ribose 1-diphosphate: step 7/9. The polypeptide is Histidinol-phosphate aminotransferase (Campylobacter fetus subsp. fetus (strain 82-40)).